The following is a 730-amino-acid chain: Elongation factor 2 (730 aa).

The tr-type G domain occupies 19–229 (DYIRNIGIVA…NITFKDIIQY (211 aa)). Residues 28-35 (AHIDHGKT), 94-98 (DTPGH), and 148-151 (NKVD) contribute to the GTP site. His-597 carries the diphthamide modification.

Belongs to the TRAFAC class translation factor GTPase superfamily. Classic translation factor GTPase family. EF-G/EF-2 subfamily.

It localises to the cytoplasm. In terms of biological role, catalyzes the GTP-dependent ribosomal translocation step during translation elongation. During this step, the ribosome changes from the pre-translocational (PRE) to the post-translocational (POST) state as the newly formed A-site-bound peptidyl-tRNA and P-site-bound deacylated tRNA move to the P and E sites, respectively. Catalyzes the coordinated movement of the two tRNA molecules, the mRNA and conformational changes in the ribosome. This chain is Elongation factor 2, found in Methanosphaera stadtmanae (strain ATCC 43021 / DSM 3091 / JCM 11832 / MCB-3).